The following is a 129-amino-acid chain: uncharacterized protein (129 aa).

Its subcellular location is the cytoplasm. The protein resides in the cytosol. It is found in the nucleus. This is an uncharacterized protein from Schizosaccharomyces pombe (strain 972 / ATCC 24843) (Fission yeast).